A 224-amino-acid chain; its full sequence is 2-C-methyl-D-erythritol 4-phosphate cytidylyltransferase (224 aa).

This sequence belongs to the IspD/TarI cytidylyltransferase family. IspD subfamily.

It carries out the reaction 2-C-methyl-D-erythritol 4-phosphate + CTP + H(+) = 4-CDP-2-C-methyl-D-erythritol + diphosphate. It functions in the pathway isoprenoid biosynthesis; isopentenyl diphosphate biosynthesis via DXP pathway; isopentenyl diphosphate from 1-deoxy-D-xylulose 5-phosphate: step 2/6. Its function is as follows. Catalyzes the formation of 4-diphosphocytidyl-2-C-methyl-D-erythritol from CTP and 2-C-methyl-D-erythritol 4-phosphate (MEP). The sequence is that of 2-C-methyl-D-erythritol 4-phosphate cytidylyltransferase from Caldicellulosiruptor saccharolyticus (strain ATCC 43494 / DSM 8903 / Tp8T 6331).